Here is a 410-residue protein sequence, read N- to C-terminus: 3-phosphoshikimate 1-carboxyvinyltransferase (410 aa).

3-phosphoshikimate-binding residues include lysine 21, serine 22, and arginine 26. Phosphoenolpyruvate is bound at residue lysine 21. The phosphoenolpyruvate site is built by glycine 69 and arginine 97. Positions 143, 144, 145, 171, 288, and 315 each coordinate 3-phosphoshikimate. Glutamine 145 contributes to the phosphoenolpyruvate binding site. Aspartate 288 functions as the Proton acceptor in the catalytic mechanism. Phosphoenolpyruvate-binding residues include arginine 319, arginine 364, and lysine 389.

This sequence belongs to the EPSP synthase family. As to quaternary structure, monomer.

Its subcellular location is the cytoplasm. It carries out the reaction 3-phosphoshikimate + phosphoenolpyruvate = 5-O-(1-carboxyvinyl)-3-phosphoshikimate + phosphate. The protein operates within metabolic intermediate biosynthesis; chorismate biosynthesis; chorismate from D-erythrose 4-phosphate and phosphoenolpyruvate: step 6/7. Catalyzes the transfer of the enolpyruvyl moiety of phosphoenolpyruvate (PEP) to the 5-hydroxyl of shikimate-3-phosphate (S3P) to produce enolpyruvyl shikimate-3-phosphate and inorganic phosphate. This chain is 3-phosphoshikimate 1-carboxyvinyltransferase, found in Bacteroides fragilis (strain ATCC 25285 / DSM 2151 / CCUG 4856 / JCM 11019 / LMG 10263 / NCTC 9343 / Onslow / VPI 2553 / EN-2).